The following is an 887-amino-acid chain: Integrator complex subunit 6 (887 aa).

Positions 3–227 constitute a VWFA domain; sequence ILLFLIDTSA…QCLESLVQKV (225 aa). The Inhibitory loop motif lies at 626–633; it reads MMIDEADE. Phosphoserine is present on Ser-804.

This sequence belongs to the Integrator subunit 6 family. Component of the Integrator complex, composed of core subunits INTS1, INTS2, INTS3, INTS4, INTS5, INTS6, INTS7, INTS8, INTS9/RC74, INTS10, INTS11/CPSF3L, INTS12, INTS13, INTS14 and INTS15. The core complex associates with protein phosphatase 2A subunits PPP2CA and PPP2R1A, to form the Integrator-PP2A (INTAC) complex. As to expression, widely expressed. Expressed in heart, brain, placenta, lung, liver, skeletal muscle, kidney and pancreas.

The protein localises to the nucleus. It is found in the chromosome. In terms of biological role, component of the integrator complex, a multiprotein complex that terminates RNA polymerase II (Pol II) transcription in the promoter-proximal region of genes. The integrator complex provides a quality checkpoint during transcription elongation by driving premature transcription termination of transcripts that are unfavorably configured for transcriptional elongation: the complex terminates transcription by (1) catalyzing dephosphorylation of the C-terminal domain (CTD) of Pol II subunit POLR2A and SUPT5H/SPT5, (2) degrading the exiting nascent RNA transcript via endonuclease activity and (3) promoting the release of Pol II from bound DNA. The integrator complex is also involved in terminating the synthesis of non-coding Pol II transcripts, such as enhancer RNAs (eRNAs), small nuclear RNAs (snRNAs), telomerase RNAs and long non-coding RNAs (lncRNAs). Within the integrator complex, INTS6 acts as a molecular adapter that promotes assembly of protein phosphatase 2A (PP2A) subunits to the integrator core complex, promoting recruitment of PP2A to transcription pause-release checkpoint. Mediates recruitment of cytoplasmic dynein to the nuclear envelope, probably as component of the integrator complex. May have a tumor suppressor role; an ectopic expression suppressing tumor cell growth. This Homo sapiens (Human) protein is Integrator complex subunit 6.